Here is a 343-residue protein sequence, read N- to C-terminus: MSDNESDGPTKQSTEPVDNAWSLKIPTFKAEDNPHGLVEESSFATLFPKYREKYLKEVWPLVQQCVAEHHLKAELDLVEGSMVVKTTRKTWDPYIIIKSRDMIKLMARSVPFEQAKRVLQDDIGCDIIKIGNLVHKKEKFVKRRQRLIGPNGATLKSIELLTDCYVLVQGNTVSALGPYKGLQQVRDIVLETMNNVHPIYNIKALMIKRELMKDPKLANEDWSRFLPKFKNKNISKRKQPKNKKPKKEYTPFPPAQPESKIDKQLATGEYFLNKEQKQAKKQQERSVKQAEAAKKQDERRNKDFVPPTEDAPSQSRKRPAETSKVDVDALKAKLMKANKKNRS.

Residues Asp-126–Asn-194 form the KH domain. Over residues Lys-230–Lys-246 the composition is skewed to basic residues. A disordered region spans residues Lys-230–Ser-343. 2 stretches are compositionally biased toward basic and acidic residues: residues Leu-272 to Asp-303 and Arg-318 to Lys-331. Residues Leu-272–Asn-341 are a coiled coil. The span at Lys-333 to Ser-343 shows a compositional bias: basic residues.

Belongs to the KRR1 family. In terms of assembly, monomer. Component of the ribosomal small subunit (SSU) processome.

The protein localises to the nucleus. The protein resides in the nucleolus. In terms of biological role, required for 40S ribosome biogenesis. Involved in nucleolar processing of pre-18S ribosomal RNA and ribosome assembly. Binds to RNA. Required for female germline development, cell viability during eye development and for survival of dividing cells and epithelial cells during early wing disk development. This Drosophila virilis (Fruit fly) protein is KRR1 small subunit processome component homolog.